Reading from the N-terminus, the 142-residue chain is Glia maturation factor beta (142 aa).

Ser2 carries the post-translational modification N-acetylserine. An ADF-H domain is found at 4–139 (SLVVCDVAED…TEEWLREKLG (136 aa)).

This sequence belongs to the actin-binding proteins ADF family. GMF subfamily. Phosphorylated; stimulated by phorbol ester.

This protein causes differentiation of brain cells, stimulation of neural regeneration, and inhibition of proliferation of tumor cells. The chain is Glia maturation factor beta (Gmfb) from Rattus norvegicus (Rat).